A 34-amino-acid polypeptide reads, in one-letter code: Cytochrome b6-f complex subunit 8 (34 aa).

The helical transmembrane segment at 3 to 23 threads the bilayer; that stretch reads LLTFGWAALLAVFTFSLAMVV.

Belongs to the PetN family. As to quaternary structure, the 4 large subunits of the cytochrome b6-f complex are cytochrome b6, subunit IV (17 kDa polypeptide, PetD), cytochrome f and the Rieske protein, while the 4 small subunits are PetG, PetL, PetM and PetN. The complex functions as a dimer.

The protein resides in the cellular thylakoid membrane. Its function is as follows. Component of the cytochrome b6-f complex, which mediates electron transfer between photosystem II (PSII) and photosystem I (PSI), cyclic electron flow around PSI, and state transitions. In Synechococcus elongatus (strain ATCC 33912 / PCC 7942 / FACHB-805) (Anacystis nidulans R2), this protein is Cytochrome b6-f complex subunit 8.